An 843-amino-acid polypeptide reads, in one-letter code: Envelope glycoprotein gp160 (843 aa).

The N-terminal stretch at 1–33 (MRVREMQRNWQHLGKWGLLFLGILIICNANATD) is a signal peptide. An N-linked (GlcNAc...) asparagine; by host glycan is attached at Asn-30. The Extracellular segment spans residues 34 to 671 (DLWVTVYYGV…ITNWLWYIKI (638 aa)). Cys-55 and Cys-75 are disulfide-bonded. Residues Asn-89, Asn-131, Asn-136, Asn-143, Asn-156, Asn-160, Asn-186, Asn-197, Asn-234, Asn-262, Asn-276, Asn-289, Asn-301, Asn-333, Asn-338, Asn-343, Asn-353, and Asn-359 are each glycosylated (N-linked (GlcNAc...) asparagine; by host). Intrachain disulfides connect Cys-120-Cys-205, Cys-127-Cys-196, Cys-132-Cys-157, Cys-218-Cys-247, and Cys-228-Cys-239. Residues 132 to 156 (CTDVNITMSDINGTSLKEDQGEIKN) are V1. The tract at residues 157 to 196 (CSFNVTTELKDKKRKQQALFYRLDVEPIKNSSNIYKLISC) is V2. A V3 region spans residues 296 to 329 (CRRPNNNTRKGIRIGPGQTFFATGEIIGDIRKAY). Cys-296 and Cys-330 form a disulfide bridge. Positions 361 to 371 (SSGGDVEITTH) are CD4-binding loop. A disulfide bridge connects residues Cys-375 and Cys-432. The V4 stretch occupies residues 382–405 (YNTSGLFNETEVANNTNENITLPC). Residues Asn-383, Asn-389, Asn-395, Asn-400, and Asn-435 are each glycosylated (N-linked (GlcNAc...) asparagine; by host). V5 stretches follow at residues 448–458 (DIDGKEILRPI) and 450–458 (DGKEILRPI). Residues 499–519 (AVGMGAVLFGFLGAAGSTMGA) are fusion peptide. Residues 561-579 (KQLQARILAVERYLKDQQL) form an immunosuppression region. A disulfide bond links Cys-585 and Cys-591. Residues Asn-598, Asn-603, Asn-612, and Asn-624 are each glycosylated (N-linked (GlcNAc...) asparagine; by host). Residues 620-654 (KEIDNYTKTIYSLIEDAQNQQERNEQELLALDKWD) are a coiled coil. The interval 649 to 670 (ALDKWDSLWSWFSITNWLWYIK) is MPER; binding to GalCer. Residues 672-692 (FIMIVGGLIGLRIVFAVLSVV) traverse the membrane as a helical segment. Topologically, residues 693–843 (NRVRQGYSPL…IRQGAERFLL (151 aa)) are cytoplasmic. The YXXL motif; contains endocytosis signal signature appears at 699 to 702 (YSPL). Positions 709–731 (PNPRGPDRPGGIEEEGGEPDRDR) are disordered. The S-palmitoyl cysteine; by host moiety is linked to residue Cys-751. A Di-leucine internalization motif motif is present at residues 842-843 (LL).

Belongs to the HIV-1 env protein family. As to quaternary structure, the mature envelope protein (Env) consists of a homotrimer of non-covalently associated gp120-gp41 heterodimers. The resulting complex protrudes from the virus surface as a spike. There seems to be as few as 10 spikes on the average virion. Interacts with host CD4, CCR5 and CXCR4. Gp120 also interacts with the C-type lectins CD209/DC-SIGN and CLEC4M/DC-SIGNR (collectively referred to as DC-SIGN(R)). Gp120 and gp41 interact with GalCer. Gp120 interacts with host ITGA4/ITGB7 complex; on CD4+ T-cells, this interaction results in rapid activation of integrin ITGAL/LFA-1, which facilitates efficient cell-to-cell spreading of HIV-1. Gp120 interacts with cell-associated heparan sulfate; this interaction increases virus infectivity on permissive cells and may be involved in infection of CD4- cells. In terms of assembly, the mature envelope protein (Env) consists of a homotrimer of non-covalently associated gp120-gp41 heterodimers. The resulting complex protrudes from the virus surface as a spike. There seems to be as few as 10 spikes on the average virion. In terms of processing, highly glycosylated by host. The high number of glycan on the protein is reffered to as 'glycan shield' because it contributes to hide protein sequence from adaptive immune system. Post-translationally, palmitoylation of the transmembrane protein and of Env polyprotein (prior to its proteolytic cleavage) is essential for their association with host cell membrane lipid rafts. Palmitoylation is therefore required for envelope trafficking to classical lipid rafts, but not for viral replication. Specific enzymatic cleavages in vivo yield mature proteins. Envelope glycoproteins are synthesized as an inactive precursor that is heavily N-glycosylated and processed likely by host cell furin in the Golgi to yield the mature SU and TM proteins. The cleavage site between SU and TM requires the minimal sequence [KR]-X-[KR]-R. About 2 of the 9 disulfide bonds of gp41 are reduced by P4HB/PDI, following binding to CD4 receptor.

Its subcellular location is the virion membrane. It is found in the host cell membrane. It localises to the host endosome membrane. Its function is as follows. Oligomerizes in the host endoplasmic reticulum into predominantly trimers. In a second time, gp160 transits in the host Golgi, where glycosylation is completed. The precursor is then proteolytically cleaved in the trans-Golgi and thereby activated by cellular furin or furin-like proteases to produce gp120 and gp41. In terms of biological role, attaches the virus to the host lymphoid cell by binding to the primary receptor CD4. This interaction induces a structural rearrangement creating a high affinity binding site for a chemokine coreceptor like CXCR4 and/or CCR5. Acts as a ligand for CD209/DC-SIGN and CLEC4M/DC-SIGNR, which are respectively found on dendritic cells (DCs), and on endothelial cells of liver sinusoids and lymph node sinuses. These interactions allow capture of viral particles at mucosal surfaces by these cells and subsequent transmission to permissive cells. HIV subverts the migration properties of dendritic cells to gain access to CD4+ T-cells in lymph nodes. Virus transmission to permissive T-cells occurs either in trans (without DCs infection, through viral capture and transmission), or in cis (following DCs productive infection, through the usual CD4-gp120 interaction), thereby inducing a robust infection. In trans infection, bound virions remain infectious over days and it is proposed that they are not degraded, but protected in non-lysosomal acidic organelles within the DCs close to the cell membrane thus contributing to the viral infectious potential during DCs' migration from the periphery to the lymphoid tissues. On arrival at lymphoid tissues, intact virions recycle back to DCs' cell surface allowing virus transmission to CD4+ T-cells. Functionally, acts as a class I viral fusion protein. Under the current model, the protein has at least 3 conformational states: pre-fusion native state, pre-hairpin intermediate state, and post-fusion hairpin state. During fusion of viral and target intracellular membranes, the coiled coil regions (heptad repeats) assume a trimer-of-hairpins structure, positioning the fusion peptide in close proximity to the C-terminal region of the ectodomain. The formation of this structure appears to drive apposition and subsequent fusion of viral and target cell membranes. Complete fusion occurs in host cell endosomes and is dynamin-dependent, however some lipid transfer might occur at the plasma membrane. The virus undergoes clathrin-dependent internalization long before endosomal fusion, thus minimizing the surface exposure of conserved viral epitopes during fusion and reducing the efficacy of inhibitors targeting these epitopes. Membranes fusion leads to delivery of the nucleocapsid into the cytoplasm. This is Envelope glycoprotein gp160 from Homo sapiens (Human).